A 358-amino-acid chain; its full sequence is C-X-C chemokine receptor type 4 (358 aa).

Residues 1–25 (MDGFSGGIDINIFDSNSTENGSGDF) are important for chemokine binding and signaling. Residues 1–44 (MDGFSGGIDINIFDSNSTENGSGDFEDFSEPCFMHDNSDFNRIF) lie on the Extracellular side of the membrane. N-linked (GlcNAc...) asparagine glycans are attached at residues N16 and N20. 2 cysteine pairs are disulfide-bonded: C32–C281 and C113–C190. Residues 45-67 (LPTIYSFIFLLGIIGNGLVVVVM) traverse the membrane as a helical segment. The Cytoplasmic portion of the chain corresponds to 68–81 (GYQKKSRTMTDKYR). The chain crosses the membrane as a helical span at residues 82 to 103 (LHLSVADLLFVFTLPFWSVDAA). The segment at 98–101 (WSVD) is chemokine binding. The Extracellular portion of the chain corresponds to 104-114 (IGWYFKEFLCK). A helical transmembrane segment spans residues 115–134 (AVHVIYTVNLYSSVLILAFI). Residues 117 to 121 (HVIYT) are chemokine binding. Residues 135–158 (SLDRYLAIVHATNSQGSRKMLADK) lie on the Cytoplasmic side of the membrane. The interval 139–151 (YLAIVHATNSQGS) is involved in dimerization; when bound to chemokine. Residues 159 to 178 (VVYAGVWLPALLLTVPDLVF) form a helical membrane-spanning segment. The Extracellular segment spans residues 179-202 (ARVSDENGQFVCDRIYPIDNRETW). Residues 190-194 (CDRIY) form a chemokine binding, important for signaling region. A helical transmembrane segment spans residues 203–223 (TVGFRFLHITVGLILPGLIIL). The Cytoplasmic segment spans residues 224-248 (ICYCVIISKLSHSKGHQKRKALKTT). Residues 249–268 (VILILAFFACWLPYYVCLTT) form a helical membrane-spanning segment. The Extracellular portion of the chain corresponds to 269 to 289 (DTFMLLGLLKADCIWENTLHK). A helical transmembrane segment spans residues 290–309 (AISITEALAFFHCCLNPILY). Topologically, residues 310 to 358 (AFLGAKFKTSAQNAFTSVSRGSSLKILSKKRAGLSSVSTESESSSFHSS) are cytoplasmic. A disordered region spans residues 338 to 358 (KKRAGLSSVSTESESSSFHSS). Residues 344 to 358 (SSVSTESESSSFHSS) are compositionally biased toward low complexity.

This sequence belongs to the G-protein coupled receptor 1 family. Monomer. Can form dimers. In terms of processing, sulfation is required for efficient binding of cxcl12/sdf-1alpha and promotes its dimerization. O- and N-glycosylated.

It is found in the cell membrane. It localises to the cytoplasm. The protein localises to the nucleus. Its subcellular location is the early endosome. The protein resides in the late endosome. It is found in the lysosome. In terms of biological role, receptor for the C-X-C chemokine cxcl12/sdf-1. Transduces a signal by increasing the intracellular calcium ion level. Signaling with cxcl12/sdf-1 mediates the directional movement of mesodermal cells during gastrulation. May play a role in the migration of embryonic presumptive primordial germ cells (pPGCs). May also be involved in regulating migration of hematopoietic stem cells into the larval liver. This is C-X-C chemokine receptor type 4 from Xenopus tropicalis (Western clawed frog).